Reading from the N-terminus, the 740-residue chain is Vertnin (740 aa).

Disordered stretches follow at residues 485–506, 560–616, and 653–673; these read EAGEEETGKAGSGAPLTSRGLI, PGMQ…DQNV, and TQSQPHSGSLPSQTLAEAPGG. The span at 578–604 shows a compositional bias: basic and acidic residues; it reads QKPEGRQKPEEQQKPEGRQKPEGRQKP. A compositionally biased stretch (polar residues) spans 653–667; that stretch reads TQSQPHSGSLPSQTL.

It belongs to the vertnin family.

The protein localises to the nucleus. In terms of biological role, acts as a transcription factor that regulates development of thoracic vertebrae. The chain is Vertnin (Vrtn) from Mus musculus (Mouse).